Here is a 493-residue protein sequence, read N- to C-terminus: Glutamyl-tRNA(Gln) amidotransferase subunit A (493 aa).

Residues K79 and S159 each act as charge relay system in the active site. S183 serves as the catalytic Acyl-ester intermediate.

Belongs to the amidase family. GatA subfamily. In terms of assembly, heterotrimer of A, B and C subunits.

It catalyses the reaction L-glutamyl-tRNA(Gln) + L-glutamine + ATP + H2O = L-glutaminyl-tRNA(Gln) + L-glutamate + ADP + phosphate + H(+). Its function is as follows. Allows the formation of correctly charged Gln-tRNA(Gln) through the transamidation of misacylated Glu-tRNA(Gln) in organisms which lack glutaminyl-tRNA synthetase. The reaction takes place in the presence of glutamine and ATP through an activated gamma-phospho-Glu-tRNA(Gln). This chain is Glutamyl-tRNA(Gln) amidotransferase subunit A, found in Brucella canis (strain ATCC 23365 / NCTC 10854 / RM-666).